Consider the following 144-residue polypeptide: Cystatin-F (144 aa).

Residues 1–18 (MWLAILLALCCLTSDTHG) form the signal peptide. Residue asparagine 61 is glycosylated (N-linked (GlcNAc...) asparagine). Positions 80-84 (QVVKG) match the Secondary area of contact motif. Disulfide bonds link cysteine 98–cysteine 109 and cysteine 123–cysteine 143.

The protein belongs to the cystatin family.

The protein resides in the secreted. Functionally, inhibits papain and cathepsin L but with affinities lower than other cystatins. May play a role in immune regulation through inhibition of a unique target in the hematopoietic system. The polypeptide is Cystatin-F (Cst7) (Mus musculus (Mouse)).